The following is a 337-amino-acid chain: CMP-sialic acid transporter (337 aa).

The Cytoplasmic segment spans residues 1-9 (MAAPRDNVT). Residues 10–30 (LLFKLYCLAVMTLMAAVYTIA) traverse the membrane as a helical segment. Residues 31–45 (LRYTRTSDKELYFST) lie on the Lumenal side of the membrane. Residues 46–64 (TAVCITEVIKLLLSVGILA) traverse the membrane as a helical segment. Lys55 is a CMP-N-acetyl-beta-neuraminate binding site. Over 65–87 (KETGSLGRFKASLRENVLGSPKE) the chain is Cytoplasmic. Residues 88–108 (LLKLSVPSLVYAVQNNMAFLA) form a helical membrane-spanning segment. 101-102 (QN) serves as a coordination point for CMP-N-acetyl-beta-neuraminate. The Lumenal portion of the chain corresponds to 109-114 (LSNLDA). The helical transmembrane segment at 115–135 (AVYQVTYQLKIPCTALCTVLM) threads the bilayer. Residue 117 to 124 (YQVTYQLK) coordinates CMP-N-acetyl-beta-neuraminate. At 136–141 (LNRTLS) the chain is on the cytoplasmic side. The chain crosses the membrane as a helical span at residues 142-160 (KLQWVSVFMLCAGVTLVQW). At 161–175 (KPAQATKVVVEQNPL) the chain is on the lumenal side. A helical transmembrane segment spans residues 176 to 196 (LGFGAIAIAVLCSGFAGVYFE). Ser188 is a CMP-N-acetyl-beta-neuraminate binding site. At 197 to 209 (KVLKSSDTSLWVR) the chain is on the cytoplasmic side. CMP-N-acetyl-beta-neuraminate is bound at residue 210 to 214 (NIQMY). Residues 210–228 (NIQMYLSGIIVTLAGVYLS) traverse the membrane as a helical segment. The Lumenal portion of the chain corresponds to 229–243 (DGAEIKEKGFFYGYT). The helical transmembrane segment at 244–262 (YYVWFVIFLASVGGLYTSV) threads the bilayer. The Cytoplasmic segment spans residues 263-269 (VVKYTDN). The chain crosses the membrane as a helical span at residues 270-288 (IMKGFSAAAAIVLSTIASV). A CMP-N-acetyl-beta-neuraminate-binding site is contributed by Lys272. The Lumenal segment spans residues 289 to 296 (MLFGLQIT). A helical transmembrane segment spans residues 297–315 (LTFALGTLLVCVSIYLYGL). Over 316–337 (PRQDTTSIQQGETASKERVIGV) the chain is Cytoplasmic. Positions 316 to 337 (PRQDTTSIQQGETASKERVIGV) are disordered.

It belongs to the nucleotide-sugar transporter family. SLC35A subfamily. In terms of assembly, monomer.

It is found in the golgi apparatus membrane. Its subcellular location is the golgi apparatus. The enzyme catalyses CMP-N-acetyl-beta-neuraminate(in) + CMP(out) = CMP-N-acetyl-beta-neuraminate(out) + CMP(in). It catalyses the reaction CMP-N-acetyl-beta-neuraminate(in) + AMP(out) = CMP-N-acetyl-beta-neuraminate(out) + AMP(in). The catalysed reaction is CDP-L-ribitol(in) + CDP(out) = CDP-L-ribitol(out) + CDP(in). It carries out the reaction UMP(out) + CMP-N-acetyl-beta-neuraminate(in) = UMP(in) + CMP-N-acetyl-beta-neuraminate(out). In terms of biological role, transports CMP-sialic acid from the cytosol into the Golgi apparatus, functioning as an antiporter that exchanges CMP-sialic acid for CMP. Binds both CMP-sialic acid and free CMP, but has higher affinity for free CMP. Also able to exchange CMP-sialic acid for AMP and UMP. Also mediates the transport of CDP-ribitol. In Homo sapiens (Human), this protein is CMP-sialic acid transporter.